We begin with the raw amino-acid sequence, 117 residues long: Large ribosomal subunit protein bL20 (117 aa).

This sequence belongs to the bacterial ribosomal protein bL20 family.

Its function is as follows. Binds directly to 23S ribosomal RNA and is necessary for the in vitro assembly process of the 50S ribosomal subunit. It is not involved in the protein synthesizing functions of that subunit. The chain is Large ribosomal subunit protein bL20 from Lawsonia intracellularis (strain PHE/MN1-00).